The following is a 316-amino-acid chain: Transaldolase (316 aa).

K132 functions as the Schiff-base intermediate with substrate in the catalytic mechanism.

Belongs to the transaldolase family. Type 1 subfamily. As to quaternary structure, homodimer.

The protein localises to the cytoplasm. The enzyme catalyses D-sedoheptulose 7-phosphate + D-glyceraldehyde 3-phosphate = D-erythrose 4-phosphate + beta-D-fructose 6-phosphate. It functions in the pathway carbohydrate degradation; pentose phosphate pathway; D-glyceraldehyde 3-phosphate and beta-D-fructose 6-phosphate from D-ribose 5-phosphate and D-xylulose 5-phosphate (non-oxidative stage): step 2/3. In terms of biological role, transaldolase is important for the balance of metabolites in the pentose-phosphate pathway. The chain is Transaldolase from Methylobacillus flagellatus (strain ATCC 51484 / DSM 6875 / VKM B-1610 / KT).